The sequence spans 168 residues: Probable acetolactate synthase small subunit (168 aa).

Residues 10–84 (IISALVEHKP…DVIKVRDLEP (75 aa)) enclose the ACT domain.

This sequence belongs to the acetolactate synthase small subunit family. Dimer of large and small chains.

It catalyses the reaction 2 pyruvate + H(+) = (2S)-2-acetolactate + CO2. The protein operates within amino-acid biosynthesis; L-isoleucine biosynthesis; L-isoleucine from 2-oxobutanoate: step 1/4. It functions in the pathway amino-acid biosynthesis; L-valine biosynthesis; L-valine from pyruvate: step 1/4. The chain is Probable acetolactate synthase small subunit (ilvH) from Methanothermobacter thermautotrophicus (strain ATCC 29096 / DSM 1053 / JCM 10044 / NBRC 100330 / Delta H) (Methanobacterium thermoautotrophicum).